The chain runs to 75 residues: Small ribosomal subunit protein bS18 (75 aa).

This sequence belongs to the bacterial ribosomal protein bS18 family. Part of the 30S ribosomal subunit. Forms a tight heterodimer with protein bS6.

Functionally, binds as a heterodimer with protein bS6 to the central domain of the 16S rRNA, where it helps stabilize the platform of the 30S subunit. In Laribacter hongkongensis (strain HLHK9), this protein is Small ribosomal subunit protein bS18.